The sequence spans 234 residues: Enterobactin synthase component D (234 aa).

Asp-107, Glu-109, and Glu-152 together coordinate Mg(2+).

The protein belongs to the P-Pant transferase superfamily. EntD family. In terms of assembly, entB, EntD, EntE, and EntF form a multienzyme complex called enterobactin synthase. Mg(2+) serves as cofactor.

Its subcellular location is the membrane. It carries out the reaction apo-[aryl-carrier protein] + CoA = holo-[aryl-carrier protein] + adenosine 3',5'-bisphosphate + H(+). It catalyses the reaction apo-[peptidyl-carrier protein] + CoA = holo-[peptidyl-carrier protein] + adenosine 3',5'-bisphosphate + H(+). Its pathway is siderophore biosynthesis; enterobactin biosynthesis. Its function is as follows. Involved in the biosynthesis of the siderophore enterobactin (enterochelin), which is a macrocyclic trimeric lactone of N-(2,3-dihydroxybenzoyl)-serine. The serine trilactone serves as a scaffolding for the three catechol functionalities that provide hexadentate coordination for the tightly ligated iron(2+) atoms. Plays an essential role in the assembly of the enterobactin by catalyzing the transfer of the 4'-phosphopantetheine (Ppant) moiety from coenzyme A to the apo-domains of both EntB (ArCP domain) and EntF (PCP domain) to yield their holo-forms which make them competent for the activation of 2,3-dihydroxybenzoate (DHB) and L-serine, respectively. This chain is Enterobactin synthase component D, found in Salmonella typhi.